We begin with the raw amino-acid sequence, 354 residues long: ATPase GET3 (354 aa).

An ATP-binding site is contributed by 26–33 (KGGVGKTT). Asp-57 is a catalytic residue. The ATP site is built by Glu-245 and Asn-272. Zn(2+)-binding residues include Cys-285 and Cys-288.

Belongs to the arsA ATPase family. As to quaternary structure, homodimer. Component of the Golgi to ER traffic (GET) complex, which is composed of GET1, GET2 and GET3. Within the complex, GET1 and GET2 form a heterotetramer which is stabilized by phosphatidylinositol binding and which binds to the GET3 homodimer. Interacts with the chloride channel protein GEF1.

The protein localises to the cytoplasm. It localises to the endoplasmic reticulum. The protein resides in the golgi apparatus. Its function is as follows. ATPase required for the post-translational delivery of tail-anchored (TA) proteins to the endoplasmic reticulum. Recognizes and selectively binds the transmembrane domain of TA proteins in the cytosol. This complex then targets to the endoplasmic reticulum by membrane-bound receptors GET1 and GET2, where the tail-anchored protein is released for insertion. This process is regulated by ATP binding and hydrolysis. ATP binding drives the homodimer towards the closed dimer state, facilitating recognition of newly synthesized TA membrane proteins. ATP hydrolysis is required for insertion. Subsequently, the homodimer reverts towards the open dimer state, lowering its affinity for the GET1-GET2 receptor, and returning it to the cytosol to initiate a new round of targeting. Cooperates with the HDEL receptor ERD2 to mediate the ATP-dependent retrieval of resident ER proteins that contain a C-terminal H-D-E-L retention signal from the Golgi to the ER. Involved in low-level resistance to the oxyanions arsenite and arsenate, and in heat tolerance. This Saccharomyces cerevisiae (strain RM11-1a) (Baker's yeast) protein is ATPase GET3.